Here is a 155-residue protein sequence, read N- to C-terminus: uncharacterized protein (155 aa).

Residues 1-24 (MQQLSKRRLSALFVTAFLPVTAFA) form the signal peptide.

This is an uncharacterized protein from Chromohalobacter salexigens (strain ATCC BAA-138 / DSM 3043 / CIP 106854 / NCIMB 13768 / 1H11).